The sequence spans 329 residues: POU domain, class 5, transcription factor 2 (329 aa).

A compositionally biased stretch (polar residues) spans 1-14 (MAGRRSSNVFPLSG). The segment at 1 to 24 (MAGRRSSNVFPLSGNSGGGLEVDT) is disordered. The POU-specific domain maps to 107–181 (DVSAIQKEME…LLKMWLEEVD (75 aa)). Residues 199-258 (RKRRRASRERRIGSNLEKLFLQCPEPTPQQISYIAGRLRLQKDLVQVWFSNRSQMGSWPT) constitute a DNA-binding region (homeobox).

The protein belongs to the POU transcription factor family. Class-5 subfamily. As to expression, in adult brain, expressed in the olfactory bulb, becoming specifically concentrated in the mitral cell layer. Also found in the pyramidal cell layer of the hippocampus, in the granule cell layer of the cerebellum and in the cortex.

It localises to the nucleus. Transcription factor that binds preferentially to the octamer motif (5'-ATGTTAAT-3'). May exert a regulatory function in meiotic events that are required for terminal differentiation of male germ cell. In Mus musculus (Mouse), this protein is POU domain, class 5, transcription factor 2 (Pou5f2).